A 139-amino-acid polypeptide reads, in one-letter code: Arsenate reductase (139 aa).

Active-site nucleophile residues include cysteine 10, cysteine 82, and cysteine 89. Intrachain disulfides connect cysteine 10–cysteine 82 and cysteine 82–cysteine 89.

The protein belongs to the low molecular weight phosphotyrosine protein phosphatase family. Thioredoxin-coupled ArsC subfamily.

Its subcellular location is the cytoplasm. It carries out the reaction arsenate + [thioredoxin]-dithiol + H(+) = arsenite + [thioredoxin]-disulfide + H2O. Its function is as follows. Catalyzes the reduction of arsenate [As(V)] to arsenite [As(III)]. This chain is Arsenate reductase, found in Shouchella clausii (strain KSM-K16) (Alkalihalobacillus clausii).